The primary structure comprises 173 residues: Large ribosomal subunit protein bL9 (173 aa).

The tract at residues 150 to 173 is disordered; that stretch reads KQEDKKSLSKKLNKADEQGERAEV.

It belongs to the bacterial ribosomal protein bL9 family.

Its function is as follows. Binds to the 23S rRNA. The sequence is that of Large ribosomal subunit protein bL9 from Borreliella burgdorferi (strain ZS7) (Borrelia burgdorferi).